An 88-amino-acid chain; its full sequence is HssA/B-like protein 19 (88 aa).

Belongs to the hssA/B family.

In Dictyostelium discoideum (Social amoeba), this protein is HssA/B-like protein 19 (hssl19).